The primary structure comprises 241 residues: 3-dehydroquinate dehydratase (241 aa).

3-dehydroquinate is bound by residues Glu35–Arg37 and Arg70. The Proton donor/acceptor role is filled by His132. Lys159 (schiff-base intermediate with substrate) is an active-site residue. Positions 201 and 224 each coordinate 3-dehydroquinate.

This sequence belongs to the type-I 3-dehydroquinase family. In terms of assembly, homodimer.

It carries out the reaction 3-dehydroquinate = 3-dehydroshikimate + H2O. Its pathway is metabolic intermediate biosynthesis; chorismate biosynthesis; chorismate from D-erythrose 4-phosphate and phosphoenolpyruvate: step 3/7. Functionally, involved in the third step of the chorismate pathway, which leads to the biosynthesis of aromatic amino acids. Catalyzes the cis-dehydration of 3-dehydroquinate (DHQ) and introduces the first double bond of the aromatic ring to yield 3-dehydroshikimate. This chain is 3-dehydroquinate dehydratase, found in Staphylococcus carnosus (strain TM300).